We begin with the raw amino-acid sequence, 101 residues long: Large ribosomal subunit protein bL27 (101 aa).

Positions 1 to 21 (MAHKKAGGSSRNGRDSRSKRL) are disordered.

The protein belongs to the bacterial ribosomal protein bL27 family.

This Buchnera aphidicola subsp. Cinara cedri (strain Cc) protein is Large ribosomal subunit protein bL27.